A 73-amino-acid chain; its full sequence is MQIKHLITLFFLVLIVADQCSAFLSLIPSLVGGSISAFKGRRKREISAQIEQYKDLQKREAELEELLDRLPMY.

The N-terminal stretch at 1–22 (MQIKHLITLFFLVLIVADQCSA) is a signal peptide. Position 39 is a lysine amide (K39). Positions 45 to 73 (EISAQIEQYKDLQKREAELEELLDRLPMY) are excised as a propeptide.

As to expression, expressed by the venom gland.

It is found in the secreted. In terms of biological role, has a low antimicrobial activity against S.aureus, E.coli, and C.albicans (MICs 120-160 uM). Has a low hemolytic activity (4% at 160 uM). Also inhibits the growth of two cancer cell lines on a total of five (the squamous carcinoma cell line H157 (IC(50)=55.9 uM) and the lung adenocarcinoma cell line H838 (IC(50)=52.5 uM)). The sequence is that of Antimicrobial peptide TsAP-1 from Tityus serrulatus (Brazilian scorpion).